A 234-amino-acid polypeptide reads, in one-letter code: Uridylate kinase (234 aa).

10–11 provides a ligand contact to ATP; sequence GS. G44 contributes to the UMP binding site. 2 residues coordinate ATP: G45 and R49. UMP-binding positions include D66 and 114–120; that span reads ITPGQTT. ATP-binding residues include T140, Y146, and D149.

Belongs to the UMP kinase family. As to quaternary structure, homohexamer.

It is found in the cytoplasm. It catalyses the reaction UMP + ATP = UDP + ADP. It functions in the pathway pyrimidine metabolism; CTP biosynthesis via de novo pathway; UDP from UMP (UMPK route): step 1/1. With respect to regulation, inhibited by UTP. Its function is as follows. Catalyzes the reversible phosphorylation of UMP to UDP. This Methanoregula boonei (strain DSM 21154 / JCM 14090 / 6A8) protein is Uridylate kinase.